A 56-amino-acid polypeptide reads, in one-letter code: Small ribosomal subunit protein eS31 (56 aa).

4 residues coordinate Zn(2+): C28, C31, C46, and C49. The C4-type zinc-finger motif lies at C28–C49.

It belongs to the eukaryotic ribosomal protein eS31 family. As to quaternary structure, part of the 30S ribosomal subunit. Zn(2+) is required as a cofactor.

In Thermococcus gammatolerans (strain DSM 15229 / JCM 11827 / EJ3), this protein is Small ribosomal subunit protein eS31.